Consider the following 26-residue polypeptide: Toxin TdII-1 (26 aa).

The protein belongs to the long (4 C-C) scorpion toxin superfamily. Sodium channel inhibitor family. Beta subfamily. As to expression, expressed by the venom gland.

The protein resides in the secreted. Beta toxins bind voltage-independently at site-4 of sodium channels (Nav) and shift the voltage of activation toward more negative potentials thereby affecting sodium channel activation and promoting spontaneous and repetitive firing. This toxin is active against mammals and crustaceans. The protein is Toxin TdII-1 of Tityus discrepans (Venezuelan scorpion).